The following is a 39-amino-acid chain: Photosystem II reaction center protein J (39 aa).

A helical membrane pass occupies residues 7–27 (IPLWIVATVAGTGVLVVVGLF).

Belongs to the PsbJ family. PSII is composed of 1 copy each of membrane proteins PsbA, PsbB, PsbC, PsbD, PsbE, PsbF, PsbH, PsbI, PsbJ, PsbK, PsbL, PsbM, PsbT, PsbX, PsbY, PsbZ, Psb30/Ycf12, peripheral proteins PsbO, CyanoQ (PsbQ), PsbU, PsbV and a large number of cofactors. It forms dimeric complexes.

The protein resides in the cellular thylakoid membrane. One of the components of the core complex of photosystem II (PSII). PSII is a light-driven water:plastoquinone oxidoreductase that uses light energy to abstract electrons from H(2)O, generating O(2) and a proton gradient subsequently used for ATP formation. It consists of a core antenna complex that captures photons, and an electron transfer chain that converts photonic excitation into a charge separation. This is Photosystem II reaction center protein J from Synechococcus elongatus (strain ATCC 33912 / PCC 7942 / FACHB-805) (Anacystis nidulans R2).